We begin with the raw amino-acid sequence, 242 residues long: Small ribosomal subunit protein eS6 (242 aa).

Basic and acidic residues predominate over residues 219–229 (EKKSEKAEEKK). The tract at residues 219 to 242 (EKKSEKAEEKKRRASSLRTQSVQA) is disordered. Residues Ser-233 and Ser-234 each carry the phosphoserine modification.

It belongs to the eukaryotic ribosomal protein eS6 family. Post-translationally, phosphorylated.

The polypeptide is Small ribosomal subunit protein eS6 (RPS6) (Yarrowia lipolytica (strain CLIB 122 / E 150) (Yeast)).